The sequence spans 219 residues: Uridylate kinase (219 aa).

9 to 10 contributes to the ATP binding site; the sequence is GS. Position 41 (G41) interacts with UMP. ATP contacts are provided by G42 and R46. Residues D63 and 110-116 contribute to the UMP site; that span reads TFPGHTT. 4 residues coordinate ATP: T136, N137, Y142, and D145.

Belongs to the UMP kinase family. As to quaternary structure, homohexamer.

Its subcellular location is the cytoplasm. The catalysed reaction is UMP + ATP = UDP + ADP. The protein operates within pyrimidine metabolism; CTP biosynthesis via de novo pathway; UDP from UMP (UMPK route): step 1/1. Inhibited by UTP. In terms of biological role, catalyzes the reversible phosphorylation of UMP to UDP. This Archaeoglobus fulgidus (strain ATCC 49558 / DSM 4304 / JCM 9628 / NBRC 100126 / VC-16) protein is Uridylate kinase.